The primary structure comprises 787 residues: Aminodeoxychorismate synthase (787 aa).

The Glutamine amidotransferase type-1 domain occupies 16 to 233 (HVLFIDSYDS…LKLSFINNVK (218 aa)). Residues Cys-112, His-207, and Glu-209 contribute to the active site. The tract at residues 304 to 787 (MSSSVISENT…KLESNLQIFM (484 aa)) is PABB component.

In the C-terminal section; belongs to the anthranilate synthase component I family.

The protein resides in the cytoplasm. It carries out the reaction chorismate + L-glutamine = 4-amino-4-deoxychorismate + L-glutamate. It participates in cofactor biosynthesis; tetrahydrofolate biosynthesis; 4-aminobenzoate from chorismate: step 1/2. Its function is as follows. Catalyzes the biosynthesis of 4-amino-4-deoxychorismate (ADC) from chorismate and glutamine. Required for the synthesis of 4-aminobenzoate (PABA), an important component in tetrahydrofolate biosynthesis. The sequence is that of Aminodeoxychorismate synthase (ABZ1) from Saccharomyces cerevisiae (strain ATCC 204508 / S288c) (Baker's yeast).